Reading from the N-terminus, the 487-residue chain is Putative KilA-N domain-containing protein L37 (487 aa).

The segment covering 1–12 (MKVQKSSKKPLK) has biased composition (basic residues). The interval 1-137 (MKVQKSSKKP…DINSDDDNNL (137 aa)) is disordered. A compositionally biased stretch (low complexity) spans 22–34 (KSGSKSMKSSKSS). 2 stretches are compositionally biased toward acidic residues: residues 47 to 77 (DSEI…ESSD) and 111 to 136 (VLDD…DDNN). The KilA-N domain occupies 175 to 284 (EISKGIYGTF…HKVSKIVNDY (110 aa)). A coiled-coil region spans residues 290-338 (FDKHEQLIKGKDDKIAELTRKIDKQTSLMKDQKSTIKEQDKKINELLSK).

In Acanthamoeba polyphaga mimivirus (APMV), this protein is Putative KilA-N domain-containing protein L37.